A 272-amino-acid chain; its full sequence is Flt3 receptor-interacting lectin (272 aa).

An N-terminal signal peptide occupies residues 1–8 (MFPSKVKS). Residues D94 and G112 each contribute to the alpha-D-mannopyranose site. N125 and N131 each carry an N-linked (GlcNAc...) asparagine glycan. Residues N152 and 237–238 (QD) each bind alpha-D-mannopyranose.

It belongs to the leguminous lectin family. Dimer (alpha/beta)2. Tetramer (alpha/beta)4. Post-translationally, glycosylated at Asn-125 by either a paucimannose type N-glycan (alpha-4) or a single N-acetylglucosamine (alpha-3). Glycosylated at Asn-131 by a paucimannose type N-glycan (alpha-2, alpha-3 and alpha-4). In alpha-2, Asn-125 is deamidated to an Asp, possibly due to the action of intrinsic peptide N-glycosidase (PGNase).

The protein resides in the protein storage vacuole lumen. Mannose-binding lectin. Accommodates most effectively a non-reducing terminal alpha-d-mannosyl unit. Strongly precipitates murine IgM but not IgG. The sequence is that of Flt3 receptor-interacting lectin from Lablab purpureus (Hyacinth bean).